The following is a 57-amino-acid chain: MIKWAIIFAIIGLIAGALGFGGMAGAAMGIAKFLFWAGIIIAIVLFVLGMTIAKKVT.

Transmembrane regions (helical) follow at residues 4–24 (WAII…GGMA) and 33–53 (FLFW…MTIA).

This sequence belongs to the UPF0391 family.

It localises to the cell membrane. The polypeptide is UPF0391 membrane protein XC_2938 (Xanthomonas campestris pv. campestris (strain 8004)).